The following is a 138-amino-acid chain: Large ribosomal subunit protein uL16 (138 aa).

Residues 1-22 (MQQPARTKYRKQQKGRNKGIAT) form a disordered region. The segment covering 7–17 (TKYRKQQKGRN) has biased composition (basic residues).

The protein belongs to the universal ribosomal protein uL16 family. Part of the 50S ribosomal subunit.

In terms of biological role, binds 23S rRNA and is also seen to make contacts with the A and possibly P site tRNAs. The polypeptide is Large ribosomal subunit protein uL16 (Nitrosospira multiformis (strain ATCC 25196 / NCIMB 11849 / C 71)).